Reading from the N-terminus, the 535-residue chain is MKKISLKTLRKSFNLNKSKEETDFMVVQQPSLASDFGKDDSLFGSCYGKDMASCDINGEDEKGGKNRSKSESLMGTLKRRLSAKQKSKGKAGTPSGSSADEDTFSSSSAPIVFKDVRAQRPIRSTSLRSHHYSPTPWPLRPTNSEETCIKMEVRVKALVHSSSPSPALNGVRKDFHDLQSETACQEQANSLKSSASHNGDLHLHLDEHVPVVIGLMPQDYIQYTVPLDEGMYPLEGSRSYCLDSSSPMEVSAVPPQVGGRSFPEDESQVDQDLVVAPEIFVDQSVNGLLIGTTGVMLQSPRAGQDDVPPLSPLLPPMQNNQIQRNFSGLTGTEAHVAESMRCHLNFDPNSAPGVARVYDSVQSSGPMVVTSLTEELKKLAKQGWYWGPITRWEAEGKLANVPDGSFLVRDSSDDRYLLSLSFRSHGKTLHTRIEHSNGRFSFYEQPDVEGHTSIVDLIEHSIRDSENGAFCYSRSRLPGSATYPVRLTNPVSRFMQVRSLQYLCRFVIRQYTRIDLIQKLPLPNKMKDYLQEKHY.

Residues 80-89 (RLSAKQKSKG) show a composition bias toward basic residues. Residues 80 to 105 (RLSAKQKSKGKAGTPSGSSADEDTFS) are disordered. In terms of domain architecture, SH2 spans 384–491 (WYWGPITRWE…TYPVRLTNPV (108 aa)). Positions 486-535 (RLTNPVSRFMQVRSLQYLCRFVIRQYTRIDLIQKLPLPNKMKDYLQEKHY) constitute an SOCS box domain.

As to quaternary structure, interacts with RBCK1. Interacts with phosphorylated IRS4. Interacts with KIT (phosphorylated). Interacts with PIM3.

It participates in protein modification; protein ubiquitination. SOCS family proteins form part of a classical negative feedback system that regulates cytokine signal transduction. May be a substrate recognition component of a SCF-like ECS (Elongin BC-CUL2/5-SOCS-box protein) E3 ubiquitin-protein ligase complex which mediates the ubiquitination and subsequent proteasomal degradation of target proteins. Regulates KIT degradation by ubiquitination of the tyrosine-phosphorylated receptor. This is Suppressor of cytokine signaling 6 (SOCS6) from Pongo abelii (Sumatran orangutan).